A 620-amino-acid chain; its full sequence is uncharacterized protein (620 aa).

The next 4 helical transmembrane spans lie at 66–86, 238–258, 546–566, and 584–604; these read LLNF…NQII, FFDA…NLLW, LGII…VWTI, and IIFI…ILVF.

It is found in the cell membrane. This is an uncharacterized protein from Mycoplasma genitalium (strain ATCC 33530 / DSM 19775 / NCTC 10195 / G37) (Mycoplasmoides genitalium).